The sequence spans 366 residues: Alanine racemase (366 aa).

Lysine 40 (proton acceptor; specific for D-alanine) is an active-site residue. Lysine 40 carries the N6-(pyridoxal phosphate)lysine modification. A substrate-binding site is contributed by arginine 136. Catalysis depends on tyrosine 263, which acts as the Proton acceptor; specific for L-alanine. Methionine 310 provides a ligand contact to substrate.

The protein belongs to the alanine racemase family. Pyridoxal 5'-phosphate serves as cofactor.

The enzyme catalyses L-alanine = D-alanine. Its pathway is amino-acid biosynthesis; D-alanine biosynthesis; D-alanine from L-alanine: step 1/1. In terms of biological role, catalyzes the interconversion of L-alanine and D-alanine. May also act on other amino acids. The polypeptide is Alanine racemase (alr) (Streptococcus pyogenes serotype M2 (strain MGAS10270)).